A 266-amino-acid chain; its full sequence is Ribonuclease 3 (266 aa).

The RNase III domain maps to 8-130; the sequence is LARLTKKLGY…IIGAVYLDSN (123 aa). E43 serves as a coordination point for Mg(2+). The active site involves D47. Residues D116 and E119 each coordinate Mg(2+). Residue E119 is part of the active site. Residues 157-227 enclose the DRBM domain; sequence DPKTRLQEFL…AQQILALIEK (71 aa). Residues 229–266 form a disordered region; the sequence is REQEKEVKIKPTKQAKLANPRHTKSNPSSSSKKSSTRK. The segment covering 253 to 266 has biased composition (low complexity); the sequence is SNPSSSSKKSSTRK.

The protein belongs to the ribonuclease III family. As to quaternary structure, homodimer. The cofactor is Mg(2+).

It localises to the cytoplasm. It catalyses the reaction Endonucleolytic cleavage to 5'-phosphomonoester.. Functionally, digests double-stranded RNA. Involved in the processing of primary rRNA transcript to yield the immediate precursors to the large and small rRNAs (23S and 16S). Processes some mRNAs, and tRNAs when they are encoded in the rRNA operon. Processes pre-crRNA and tracrRNA of type II CRISPR loci if present in the organism. The sequence is that of Ribonuclease 3 from Colwellia psychrerythraea (strain 34H / ATCC BAA-681) (Vibrio psychroerythus).